We begin with the raw amino-acid sequence, 668 residues long: Biotin biosynthesis bifunctional protein BioWF (668 aa).

Position 293 (Arg-293) interacts with substrate. Pyridoxal 5'-phosphate is bound at residue 380-381 (GY). Residue His-405 coordinates substrate. Residues Ser-451, 476–479 (DDAH), and 507–510 (TASK) contribute to the pyridoxal 5'-phosphate site. Lys-510 is subject to N6-(pyridoxal phosphate)lysine.

The protein in the N-terminal section; belongs to the BioW family. It in the C-terminal section; belongs to the class-II pyridoxal-phosphate-dependent aminotransferase family. BioF subfamily. In terms of assembly, homodimer. It depends on Mg(2+) as a cofactor. The cofactor is pyridoxal 5'-phosphate.

It catalyses the reaction heptanedioate + ATP + CoA = 6-carboxyhexanoyl-CoA + AMP + diphosphate. The catalysed reaction is 6-carboxyhexanoyl-[ACP] + L-alanine + H(+) = (8S)-8-amino-7-oxononanoate + holo-[ACP] + CO2. The protein operates within metabolic intermediate metabolism; pimeloyl-CoA biosynthesis; pimeloyl-CoA from pimelate: step 1/1. It participates in cofactor biosynthesis; biotin biosynthesis. In terms of biological role, catalyzes both the decarboxylative condensation of pimeloyl-[acyl-carrier protein] and L-alanine to produce 8-amino-7-oxononanoate (AON), [acyl-carrier protein], and carbon dioxide, and the transformation of pimelate into pimeloyl-CoA with concomitant hydrolysis of ATP to AMP. The sequence is that of Biotin biosynthesis bifunctional protein BioWF from Cutibacterium acnes (strain SK137) (Propionibacterium acnes).